The primary structure comprises 527 residues: Glucose-6-phosphate isomerase (527 aa).

Catalysis depends on Glu323, which acts as the Proton donor. Residues His352 and Lys454 contribute to the active site.

The protein belongs to the GPI family.

It localises to the cytoplasm. It catalyses the reaction alpha-D-glucose 6-phosphate = beta-D-fructose 6-phosphate. The protein operates within carbohydrate biosynthesis; gluconeogenesis. It functions in the pathway carbohydrate degradation; glycolysis; D-glyceraldehyde 3-phosphate and glycerone phosphate from D-glucose: step 2/4. Its function is as follows. Catalyzes the reversible isomerization of glucose-6-phosphate to fructose-6-phosphate. The polypeptide is Glucose-6-phosphate isomerase (Prochlorococcus marinus (strain MIT 9515)).